Reading from the N-terminus, the 338-residue chain is NADPH dehydrogenase (338 aa).

23–26 contributes to the FMN binding site; the sequence is SPMC. Tyr-28 provides a ligand contact to substrate. The FMN site is built by Ala-60 and Gln-102. Position 164–167 (164–167) interacts with substrate; it reads HGAH. Residues Arg-215 and 307–308 contribute to the FMN site; that span reads GR.

Belongs to the NADH:flavin oxidoreductase/NADH oxidase family. NamA subfamily. In terms of assembly, homotetramer. It depends on FMN as a cofactor.

The catalysed reaction is A + NADPH + H(+) = AH2 + NADP(+). In terms of biological role, catalyzes the reduction of the double bond of an array of alpha,beta-unsaturated aldehydes and ketones. It also reduces the nitro group of nitroester and nitroaromatic compounds. It could have a role in detoxification processes. In Bacillus pumilus (strain SAFR-032), this protein is NADPH dehydrogenase.